Reading from the N-terminus, the 1073-residue chain is Collagen alpha-2(I) chain (1073 aa).

Positions 1–939 (APDPGPGPMG…PGPAGGGYDV (939 aa)) are disordered. 3 stretches are compositionally biased toward low complexity: residues 100 to 148 (EPGA…AAGP), 178 to 187 (EPGPNGAVGP), and 194 to 215 (PGNN…AGAP). Positions 217–227 (FPGPRGGPGPQ) are enriched in pro residues. The span at 229-239 (PQGAAGQRGLA) shows a compositional bias: low complexity. Gly residues predominate over residues 246-255 (GVKGDGGPKG). 4 stretches are compositionally biased toward low complexity: residues 296–315 (MPGA…PGDA), 321–348 (SGPA…AGPA), 386–399 (APGP…TGAT), and 411–423 (QGAA…QGLP). A compositionally biased stretch (gly residues) spans 424 to 433 (GPAGGAGEAG). Residues 458 to 468 (NPGAAGASGPQ) are compositionally biased toward low complexity. The span at 481 to 508 (GTDGGKGEPGAAGAAGGPGHQGPGGMPG) shows a compositional bias: gly residues. Over residues 519–530 (KGEKGEAGHRGP) the composition is skewed to basic and acidic residues. 2 stretches are compositionally biased toward low complexity: residues 561-575 (SGSF…ARGA) and 584-597 (PAGA…PGAD). The segment covering 607-616 (GPSGGKGESG) has biased composition (gly residues). Composition is skewed to low complexity over residues 617-642 (PAGP…TGAR), 653-680 (FPGA…PAGK), and 708-729 (SGEK…SGPL). The segment covering 745-757 (GSPGGAGGVGEPG) has biased composition (gly residues). Residues 758-774 (RVGPAGPAGARGNLGLP) show a composition bias toward low complexity. Over residues 811–820 (GESGPGGAAG) the composition is skewed to gly residues. The segment covering 821–836 (AVGPAGARGAAGPSGP) has biased composition (low complexity). The segment covering 837–851 (RGEKGVAGEKGERGL) has biased composition (basic and acidic residues). Composition is skewed to low complexity over residues 857 to 876 (LQGM…AGPN) and 906 to 917 (PGARGPPGYVGP). Over residues 918-932 (AGPPGSPGLPGPPGP) the composition is skewed to pro residues. A Fibrillar collagen NC1 domain is found at 1039–1073 (RTNKPSRLPLLDLAPLDLGGADQEFGLDLGPVCFK).

The protein belongs to the fibrillar collagen family.

The protein localises to the secreted. Its subcellular location is the extracellular space. It localises to the extracellular matrix. This Epinephelus aeneus (White grouper) protein is Collagen alpha-2(I) chain.